A 241-amino-acid polypeptide reads, in one-letter code: Octanoyltransferase (241 aa).

One can recognise a BPL/LPL catalytic domain in the interval 50–238 (KIAHEQVWLL…AFEQIFGPTI (189 aa)). Residues 89–96 (RGGEFTYH), 169–171 (AIG), and 182–184 (GIS) each bind substrate. Cys200 acts as the Acyl-thioester intermediate in catalysis.

This sequence belongs to the LipB family.

The protein localises to the cytoplasm. It carries out the reaction octanoyl-[ACP] + L-lysyl-[protein] = N(6)-octanoyl-L-lysyl-[protein] + holo-[ACP] + H(+). It functions in the pathway protein modification; protein lipoylation via endogenous pathway; protein N(6)-(lipoyl)lysine from octanoyl-[acyl-carrier-protein]: step 1/2. Its function is as follows. Catalyzes the transfer of endogenously produced octanoic acid from octanoyl-acyl-carrier-protein onto the lipoyl domains of lipoate-dependent enzymes. Lipoyl-ACP can also act as a substrate although octanoyl-ACP is likely to be the physiological substrate. This is Octanoyltransferase from Bartonella bacilliformis (strain ATCC 35685 / KC583 / Herrer 020/F12,63).